Reading from the N-terminus, the 438-residue chain is Transcriptional regulator Mb0495 (438 aa).

Positions 1 to 12 (MYSTNRTSQSLS) are enriched in polar residues. Residues 1–22 (MYSTNRTSQSLSRKPGRKHQLR) are disordered. Positions 52-73 (VGRDVIAGSTSLSIATVNRQVI) form a DNA-binding region, H-T-H motif.

It belongs to the ROK (NagC/XylR) family.

Positively regulates the expression of PE13 and PPE18. This Mycobacterium bovis (strain ATCC BAA-935 / AF2122/97) protein is Transcriptional regulator Mb0495.